Reading from the N-terminus, the 640-residue chain is MGRRSTSSTKSGKFMNPTDQARKEARKRELKKNKKQRMMVRAAVLKMKDPRQIIRDMEKLDEMEFNPVQQPLLNEKVLRDKRKKLRETFERIVRLYERENPETYKELRKLELEYETKRGQLSLYFDSVKNAESVEVDSIPLPEMPHAPSSILIQDIPLPGAQPPSILKKSSALGKASSLSAAALAGVPRLPAGRKPPGPPPGPPPPQILQLYGNTRRTEASAGSDTEMMDGGRDSDSKSEADEESDSQEDSSAEREDSDRGERDEERERADKHTGRSVRFADMPSPNKKKRRVVKTKSITPLQAMMLRMAGQSVPEEEEEDEEEEYSESEDSEAEDQASTDAPQPLVNPRLPVPSAPMAAQQPPSLMQAPPITGPPPLGPPPAPPMRPPGPPSGPPPGPPPGAPPFLRPPGLPSALRGPMPRLLPPGPPPGRPPGPPPGPPPGLPPGPPPRGPPPRLPPPAPPGMPPPPPPPRAGPPRMAPPLSLFPPPLNPNVLSAPPSIVPRQKSPAASSNEGAPSGSALQMPPPPGTTANPLAPTIEKRATVAGSGGASAQGGGATISAKPQIINPKAEVTRFVPTALRVRRDRAGGTGRREEERPPANQQTPAHQAPPIAHAPTPPNLKTKDQVYEAFMREMEGLL.

Positions 1–11 are enriched in polar residues; that stretch reads MGRRSTSSTKS. The segment at 1-37 is disordered; that stretch reads MGRRSTSSTKSGKFMNPTDQARKEARKRELKKNKKQR. Residues 28–37 are compositionally biased toward basic residues; the sequence is RELKKNKKQR. Residues 75–122 adopt a coiled-coil conformation; the sequence is EKVLRDKRKKLRETFERIVRLYERENPETYKELRKLELEYETKRGQLS. 3 disordered regions span residues 155-174, 187-563, and 582-625; these read DIPL…SALG, VPRL…ISAK, and RVRR…LKTK. The segment covering 194–207 has biased composition (pro residues); it reads RKPPGPPPGPPPPQ. Residues 230 to 240 are compositionally biased toward basic and acidic residues; the sequence is DGGRDSDSKSE. Residues 241–251 are compositionally biased toward acidic residues; that stretch reads ADEESDSQEDS. The span at 252-274 shows a compositional bias: basic and acidic residues; sequence SAEREDSDRGERDEERERADKHT. Ser285 carries the post-translational modification Phosphoserine. Positions 315–338 are enriched in acidic residues; that stretch reads PEEEEEDEEEEYSESEDSEAEDQA. Over residues 356-371 the composition is skewed to low complexity; that stretch reads APMAAQQPPSLMQAPP. Pro residues-rich tracts occupy residues 372–412 and 422–491; these read ITGP…PPGL and RLLP…PPLN. A PGR motif is present at residues 421–432; the sequence is PRLLPPGPPPGR. The span at 547-558 shows a compositional bias: gly residues; the sequence is GSGGASAQGGGA. Over residues 586–599 the composition is skewed to basic and acidic residues; the sequence is DRAGGTGRREEERP. The span at 603-616 shows a compositional bias: low complexity; that stretch reads QQTPAHQAPPIAHA.

The protein resides in the cytoplasm. The protein localises to the nucleus. Its function is as follows. Activates pre-mRNA splicing. This is WW domain-binding protein 11 (wbp11) from Danio rerio (Zebrafish).